The sequence spans 93 residues: Large ribosomal subunit protein bL27 (93 aa).

The interval 1 to 22 (MAHKKAGGSSRNGRDSAGRRLG) is disordered.

This sequence belongs to the bacterial ribosomal protein bL27 family.

The polypeptide is Large ribosomal subunit protein bL27 (Parvibaculum lavamentivorans (strain DS-1 / DSM 13023 / NCIMB 13966)).